The chain runs to 238 residues: Protein G1-like8 (238 aa).

2 disordered regions span residues 1–33 (MEGG…RYES) and 147–238 (KARG…ATRV). A compositionally biased stretch (low complexity) spans 10–27 (GQAQPVAQAPPAMQPMQQ). The 128-residue stretch at 30–157 (RYESQKRRDW…ARGIPYEKKK (128 aa)) folds into the ALOG domain. The Nuclear localization signal motif lies at 155–159 (KKKRK). Pro residues predominate over residues 165 to 176 (QPPPPPPPPPQH). Low complexity-rich tracts occupy residues 177 to 213 (QPGA…ATSQ) and 222 to 238 (TTTT…ATRV).

Belongs to the plant homeotic and developmental regulators ALOG protein family.

The protein resides in the nucleus. In terms of biological role, probable transcription regulator that acts as a developmental regulator by promoting cell growth in response to light. This Oryza sativa subsp. japonica (Rice) protein is Protein G1-like8 (G1L8).